We begin with the raw amino-acid sequence, 420 residues long: D-tagatose-1,6-bisphosphate aldolase subunit GatZ (420 aa).

The protein belongs to the GatZ/KbaZ family. GatZ subfamily. Forms a complex with GatY.

It functions in the pathway carbohydrate metabolism; D-tagatose 6-phosphate degradation; D-glyceraldehyde 3-phosphate and glycerone phosphate from D-tagatose 6-phosphate: step 2/2. Functionally, component of the tagatose-1,6-bisphosphate aldolase GatYZ that is required for full activity and stability of the Y subunit. Could have a chaperone-like function for the proper and stable folding of GatY. When expressed alone, GatZ does not show any aldolase activity. Is involved in the catabolism of galactitol. In Escherichia coli O45:K1 (strain S88 / ExPEC), this protein is D-tagatose-1,6-bisphosphate aldolase subunit GatZ.